The sequence spans 669 residues: Dymeclin (669 aa).

The N-myristoyl glycine moiety is linked to residue glycine 2.

Belongs to the dymeclin family. Interacts with GOLM1 and PPIB. In terms of processing, myristoylated in vitro; myristoylation is not essential for protein targeting to Golgi compartment.

It localises to the cytoplasm. The protein localises to the golgi apparatus. Its subcellular location is the membrane. Its function is as follows. Necessary for correct organization of Golgi apparatus. Involved in bone development. The protein is Dymeclin (DYM) of Pongo abelii (Sumatran orangutan).